The chain runs to 188 residues: Putative 3-methyladenine DNA glycosylase (188 aa).

It belongs to the DNA glycosylase MPG family.

In Ehrlichia ruminantium (strain Gardel), this protein is Putative 3-methyladenine DNA glycosylase.